We begin with the raw amino-acid sequence, 106 residues long: Large ribosomal subunit protein uL23 (106 aa).

It belongs to the universal ribosomal protein uL23 family. In terms of assembly, part of the 50S ribosomal subunit. Contacts protein L29, and trigger factor when it is bound to the ribosome.

One of the early assembly proteins it binds 23S rRNA. One of the proteins that surrounds the polypeptide exit tunnel on the outside of the ribosome. Forms the main docking site for trigger factor binding to the ribosome. The sequence is that of Large ribosomal subunit protein uL23 from Neisseria gonorrhoeae (strain ATCC 700825 / FA 1090).